The following is a 504-amino-acid chain: MKKTEMGRFNISPDEDSSSYSSNSDFNYSYPTKQAALKSHYADVDPENQNFLLESNLGKKKYETDFHPGTTSFGMSVFNLSNAIVGSGILGLSYAMANTGIALFIILLTFVSIFSLYSVHLLLKTANEGGSLLYEQLGHKAYGLAGKLAASGSITMQNIGAMSSYLFIVKYELPLVIKALMNIEDTNGLWYLNGDYLVLLVSLVLILPLSLLRNLGYLGYTSGLSLLCMIFFLIVVICKKFQIPCPVEAALVANETVNGTFTQAALALAFNSTADDACRPRYFIFNSQTVYAVPILTFSFVCHPAVLPIYEELKSRSRRRMMNVSKISFFAMFLMYLLAALFGYLTFYGHVESELLHTYSEIVGTDILLLVVRLAVLVAVTLTVPVVIFPIRSSVTHLLCPTKEFSWLRHSIITVTILSFTNLLVIFVPTIRDIFGFIGASAAAMLIFILPSAFYIKLVKKEPMRSVQKIGALCFLLSGIVVMIGSMGLIVLDWVHDASAAGGH.

Positions 1–23 (MKKTEMGRFNISPDEDSSSYSSN) are disordered. The Cytoplasmic segment spans residues 1-76 (MKKTEMGRFN…HPGTTSFGMS (76 aa)). Residues 1-96 (MKKTEMGRFN…SGILGLSYAM (96 aa)) form a regulates protein turnover upon amino acid deprivation region. Phosphoserine occurs at positions 12, 21, 22, and 55. A helical transmembrane segment spans residues 77–96 (VFNLSNAIVGSGILGLSYAM). Asn-82 is a Na(+) binding site. Topologically, residues 97–102 (ANTGIA) are extracellular. A helical transmembrane segment spans residues 103–123 (LFIILLTFVSIFSLYSVHLLL). The Cytoplasmic segment spans residues 124 to 158 (KTANEGGSLLYEQLGHKAYGLAGKLAASGSITMQN). Residues 159–177 (IGAMSSYLFIVKYELPLVI) traverse the membrane as a helical segment. At 178–188 (KALMNIEDTNG) the chain is on the extracellular side. Residues 189–209 (LWYLNGDYLVLLVSLVLILPL) form a helical membrane-spanning segment. Over 210–217 (SLLRNLGY) the chain is Cytoplasmic. Residues 218-238 (LGYTSGLSLLCMIFFLIVVIC) form a helical membrane-spanning segment. At 239 to 289 (KKFQIPCPVEAALVANETVNGTFTQAALALAFNSTADDACRPRYFIFNSQT) the chain is on the extracellular side. Cys-245 and Cys-278 are disulfide-bonded. N-linked (GlcNAc...) asparagine glycans are attached at residues Asn-254 and Asn-258. The chain crosses the membrane as a helical span at residues 290–310 (VYAVPILTFSFVCHPAVLPIY). Residues 311 to 326 (EELKSRSRRRMMNVSK) are Cytoplasmic-facing. Residues 327–347 (ISFFAMFLMYLLAALFGYLTF) form a helical membrane-spanning segment. The Extracellular portion of the chain corresponds to 348 to 368 (YGHVESELLHTYSEIVGTDIL). A helical transmembrane segment spans residues 369 to 389 (LLVVRLAVLVAVTLTVPVVIF). Residue Thr-383 coordinates Na(+). Residues 390–410 (PIRSSVTHLLCPTKEFSWLRH) are Cytoplasmic-facing. The helical transmembrane segment at 411-431 (SIITVTILSFTNLLVIFVPTI) threads the bilayer. Over 432–433 (RD) the chain is Extracellular. A helical transmembrane segment spans residues 434–454 (IFGFIGASAAAMLIFILPSAF). Over 455-469 (YIKLVKKEPMRSVQK) the chain is Cytoplasmic. The chain crosses the membrane as a helical span at residues 470–492 (IGALCFLLSGIVVMIGSMGLIVL). Residues 493–504 (DWVHDASAAGGH) lie on the Extracellular side of the membrane.

Belongs to the amino acid/polyamine transporter 2 family. Polyubiquitination by NEDD4L regulates the degradation and the activity of SLC38A2. Expressed in cerebral and cerebellar astrocytes and neurons.

It localises to the cell membrane. The catalysed reaction is L-alanine(in) + Na(+)(in) = L-alanine(out) + Na(+)(out). It carries out the reaction glycine(in) + Na(+)(in) = glycine(out) + Na(+)(out). It catalyses the reaction L-serine(in) + Na(+)(in) = L-serine(out) + Na(+)(out). The enzyme catalyses L-proline(in) + Na(+)(in) = L-proline(out) + Na(+)(out). The catalysed reaction is L-methionine(in) + Na(+)(in) = L-methionine(out) + Na(+)(out). It carries out the reaction L-histidine(in) + Na(+)(in) = L-histidine(out) + Na(+)(out). It catalyses the reaction L-asparagine(in) + Na(+)(in) = L-asparagine(out) + Na(+)(out). The enzyme catalyses L-glutamine(in) + Na(+)(in) = L-glutamine(out) + Na(+)(out). The catalysed reaction is L-threonine(in) + Na(+)(in) = L-threonine(out) + Na(+)(out). It carries out the reaction L-leucine(in) + Na(+)(in) = L-leucine(out) + Na(+)(out). It catalyses the reaction L-phenylalanine(in) + Na(+)(in) = L-phenylalanine(out) + Na(+)(out). With respect to regulation, inhibited by N-methyl-D-glucamine. Inhibited by choline. Allosteric regulation of sodium ions binding by pH. Symporter that cotransports neutral amino acids and sodium ions from the extracellular to the intracellular side of the cell membrane. The transport is pH-sensitive, Li(+)-intolerant, electrogenic, driven by the Na(+) electrochemical gradient and cotransports of neutral amino acids and sodium ions with a stoichiometry of 1:1. May function in the transport of amino acids at the blood-brain barrier. May function in the transport of amino acids in the supply of maternal nutrients to the fetus through the placenta. Maintains a key metabolic glutamine/glutamate balance underpinning retrograde signaling by dendritic release of the neurotransmitter glutamate. Transports L-proline in differentiating osteoblasts for the efficient synthesis of proline-enriched proteins and provides proline essential for osteoblast differentiation and bone formation during bone development. This is Sodium-coupled neutral amino acid symporter 2 from Mus musculus (Mouse).